A 202-amino-acid chain; its full sequence is Outer-membrane lipoprotein carrier protein (202 aa).

Positions Met1–Ser18 are cleaved as a signal peptide.

Belongs to the LolA family. Monomer.

The protein localises to the periplasm. In terms of biological role, participates in the translocation of lipoproteins from the inner membrane to the outer membrane. Only forms a complex with a lipoprotein if the residue after the N-terminal Cys is not an aspartate (The Asp acts as a targeting signal to indicate that the lipoprotein should stay in the inner membrane). This chain is Outer-membrane lipoprotein carrier protein, found in Legionella pneumophila (strain Corby).